The chain runs to 465 residues: Ribulose bisphosphate carboxylase large chain (465 aa).

N6,N6,N6-trimethyllysine is present on Lys-4. Residues Asn-113 and Thr-163 each contribute to the substrate site. The active-site Proton acceptor is the Lys-165. Lys-167 is a substrate binding site. Residues Lys-191, Asp-193, and Glu-194 each contribute to the Mg(2+) site. At Lys-191 the chain carries N6-carboxylysine. His-284 functions as the Proton acceptor in the catalytic mechanism. 3 residues coordinate substrate: Arg-285, His-317, and Ser-369.

The protein belongs to the RuBisCO large chain family. Type I subfamily. Heterohexadecamer of 8 large chains and 8 small chains; disulfide-linked. The disulfide link is formed within the large subunit homodimers. Mg(2+) is required as a cofactor. In terms of processing, the disulfide bond which can form in the large chain dimeric partners within the hexadecamer appears to be associated with oxidative stress and protein turnover.

The protein resides in the plastid. It is found in the chloroplast. It catalyses the reaction 2 (2R)-3-phosphoglycerate + 2 H(+) = D-ribulose 1,5-bisphosphate + CO2 + H2O. The enzyme catalyses D-ribulose 1,5-bisphosphate + O2 = 2-phosphoglycolate + (2R)-3-phosphoglycerate + 2 H(+). Functionally, ruBisCO catalyzes two reactions: the carboxylation of D-ribulose 1,5-bisphosphate, the primary event in carbon dioxide fixation, as well as the oxidative fragmentation of the pentose substrate in the photorespiration process. Both reactions occur simultaneously and in competition at the same active site. This Nepenthes alata (Winged pitcher plant) protein is Ribulose bisphosphate carboxylase large chain.